A 352-amino-acid chain; its full sequence is N-terminal EF-hand calcium-binding protein 1 (352 aa).

A Phosphoserine modification is found at Ser-4. 2 consecutive EF-hand domains span residues 26-61 (KGMS…GVLS) and 60-95 (LSGE…HLGE). Residues Asp-39, Asn-41, Asp-43, Lys-45, and Glu-50 each contribute to the Ca(2+) site. Residues 135 to 163 (LLKETLNQLQSLQNSLECAMETTEEQTRQ) are a coiled coil. The tract at residues 155-202 (ETTEEQTRQERQGPSKPEVLSIQWPGKRSSRRVQRHNSFSPNSPQFNV) is disordered. Positions 190–202 (HNSFSPNSPQFNV) are enriched in polar residues. Ser-192 and Ser-197 each carry phosphoserine. The stretch at 209–275 (EEDNQWMTQI…EEFQLALKHY (67 aa)) forms a coiled coil. An ABM domain is found at 252–340 (MLVQRQMSVT…LETPELTSTM (89 aa)).

Interacts with STX1. May interact with CPNE6. Expressed in brain (at protein level). Expressed in the cerebral cortex only in layer 4, thalamic nuclei (the mediodorsal nucleus), hippocampus (a small band of pyramidal neurons at the boundary between CA1 and CA3), interneurons interspersed throughout the hippocampus proper, interneurons in the hilus, bodies of the neurons but also their dendritic projections (at protein level).

The protein resides in the cytoplasm. The sequence is that of N-terminal EF-hand calcium-binding protein 1 (Necab1) from Mus musculus (Mouse).